A 233-amino-acid chain; its full sequence is uncharacterized protein (233 aa).

Belongs to the RHS family.

This is an uncharacterized protein from Escherichia coli (strain K12).